A 610-amino-acid polypeptide reads, in one-letter code: Phosphoenolpyruvate carboxykinase [GTP] (610 aa).

Substrate is bound by residues R82 and 221-223; that span reads YGG. Mn(2+)-binding residues include K230 and H250. S272 is a binding site for substrate. Position 273–278 (273–278) interacts with GTP; sequence ACGKTN. Residue C274 is part of the active site. D297 provides a ligand contact to Mn(2+). Substrate is bound at residue 387 to 389; sequence NSR. GTP is bound by residues R389, R420, and 515 to 518; that span reads FGDN.

Belongs to the phosphoenolpyruvate carboxykinase [GTP] family. As to quaternary structure, monomer. It depends on Mn(2+) as a cofactor.

It is found in the cytoplasm. It carries out the reaction oxaloacetate + GTP = phosphoenolpyruvate + GDP + CO2. The protein operates within carbohydrate biosynthesis; gluconeogenesis. In terms of biological role, involved in the gluconeogenesis. Catalyzes the conversion of oxaloacetate (OAA) to phosphoenolpyruvate (PEP), the rate-limiting step in the metabolic pathway that produces glucose from lactate and other precursors derived from the citric acid cycle. The protein is Phosphoenolpyruvate carboxykinase [GTP] of Corynebacterium glutamicum (strain ATCC 13032 / DSM 20300 / JCM 1318 / BCRC 11384 / CCUG 27702 / LMG 3730 / NBRC 12168 / NCIMB 10025 / NRRL B-2784 / 534).